The following is a 492-amino-acid chain: N-succinylglutamate 5-semialdehyde dehydrogenase (492 aa).

Residue 220–225 (GSANTG) coordinates NAD(+). Active-site residues include Glu-243 and Cys-277.

This sequence belongs to the aldehyde dehydrogenase family. AstD subfamily.

It catalyses the reaction N-succinyl-L-glutamate 5-semialdehyde + NAD(+) + H2O = N-succinyl-L-glutamate + NADH + 2 H(+). Its pathway is amino-acid degradation; L-arginine degradation via AST pathway; L-glutamate and succinate from L-arginine: step 4/5. Its function is as follows. Catalyzes the NAD-dependent reduction of succinylglutamate semialdehyde into succinylglutamate. This chain is N-succinylglutamate 5-semialdehyde dehydrogenase, found in Escherichia coli (strain ATCC 8739 / DSM 1576 / NBRC 3972 / NCIMB 8545 / WDCM 00012 / Crooks).